Consider the following 535-residue polypeptide: Zinc transporter ZIP5 (535 aa).

The N-terminal stretch at 1-19 is a signal peptide; the sequence is MGPPVHHLLTGLCVGVALG. At 20-210 the chain is on the extracellular side; sequence WVGGSVPNLG…PAPPGDVLSA (191 aa). N-linked (GlcNAc...) asparagine glycans are attached at residues asparagine 49 and asparagine 158. A helical transmembrane segment spans residues 211–231; it reads LLHSGLAVLFLSLPAPLSLLL. The Cytoplasmic portion of the chain corresponds to 232–242; the sequence is LRLLGPRLLRP. The helical transmembrane segment at 243 to 263 threads the bilayer; it reads VLGFLGALAVGTLCGDALLHL. The Extracellular portion of the chain corresponds to 264-285; the sequence is LPHAQGGRHTGPSEQSEEDLGP. The chain crosses the membrane as a helical span at residues 286-306; the sequence is GLSVLGGLFLLFMLENTLGLV. Residues 307–439 are Cytoplasmic-facing; that stretch reads RHRGLRPRCC…LLQEGLSFRK (133 aa). The interval 316-373 is disordered; the sequence is CRNKRDLGEPNPDPEDGSGMVLRPLQAASEPEVQGQRENRQSSPSLAPPGHQGHSHEH. Serine 333 bears the Phosphoserine mark. Histidine 371 is subject to Pros-methylhistidine. Residues 440-460 form a helical membrane-spanning segment; it reads LLLLSLVSGALGLGGAALGVG. Over 461–465 the chain is Extracellular; that stretch reads LSLGP. Residues 466 to 486 traverse the membrane as a helical segment; sequence VPLTPWVFGTTAGVFLYVALV. The Cytoplasmic segment spans residues 487–503; the sequence is DMLPTLLRPPEPLPVFH. A helical transmembrane segment spans residues 504 to 524; sequence VLLQGLGLLLGGSLMFTIALL. Residues 525–535 lie on the Extracellular side of the membrane; sequence EEQLVPTVPDG.

This sequence belongs to the ZIP transporter (TC 2.A.5) family. In terms of assembly, homodimer. In terms of processing, N-Glycosylated. Methylated at His-371 by METTL9. Expressed in all stages of eye development and primarily in the sclera and several layers of the retina, including the inner segment, outer plexiform layer and ganglion cell layer. Expressed in pancreas, kidney and the proximal and distal small intestine as well as in the embryonic visceral yolk sac. In the proximal intestine, expression is predominant in the crypts but diminishes toward the apical regions of the villi.

The protein localises to the basolateral cell membrane. The enzyme catalyses Zn(2+)(in) = Zn(2+)(out). Uniporter that transports zinc(2+) into polarized cells of enterocytes, pancreatic acinar and endoderm cells across the basolateral membrane and participates, notably, in zinc excretion from the intestine by the uptake of zinc from the blood into the intestine. The transport mechanism is temperature- and concentration-dependent and saturable. In addition, is also a high affinity copper transporter in vitro. Also may regulate glucose-stimulated insulin secretion (GSIS) in islets primarily through the zinc-activated SIRT1-PPARGC1A axis. Could regulate the BMP/TGF-beta (bone morphogenetic protein/transforming growth factor-beta) signaling pathway and modulates extracellular matrix (ECM) proteins of the sclera. Plays a role in eye development. This Mus musculus (Mouse) protein is Zinc transporter ZIP5.